A 336-amino-acid polypeptide reads, in one-letter code: Ornithine carbamoyltransferase, catabolic (336 aa).

Residues 57–60, glutamine 84, arginine 108, and 135–138 contribute to the carbamoyl phosphate site; these read STRT and HPTQ. Residues asparagine 168, aspartate 232, and 236 to 237 contribute to the L-ornithine site; that span reads SM. Residues 274-275 and arginine 321 each bind carbamoyl phosphate; that span reads CL.

The protein belongs to the aspartate/ornithine carbamoyltransferase superfamily. OTCase family. Nonameric or dodecamer (tetramer of trimers).

Its subcellular location is the cytoplasm. It carries out the reaction carbamoyl phosphate + L-ornithine = L-citrulline + phosphate + H(+). The protein operates within amino-acid degradation; L-arginine degradation via ADI pathway; carbamoyl phosphate from L-arginine: step 2/2. With respect to regulation, inhibited by 2-aminopentanoic acid (norvaline). Activated by phosphate and nucleoside monophosphates such as AMP, GMP, CMP, UMP. Allosterically inhibited by the polyamines such as spermidine and putrescine. In terms of biological role, involved in the catabolism of arginine. Catalyzes the phosphorolysis of citrulline, the reverse reaction of the biosynthetic one, yielding ornithine and carbamoyl phosphate which serve to generate ATP from ADP. This catabolic OTCase does not carry out the biosynthetic reaction because of a poor affinity and a marked cooperativity for carbamoyl phosphate. In Pseudomonas aeruginosa (strain ATCC 15692 / DSM 22644 / CIP 104116 / JCM 14847 / LMG 12228 / 1C / PRS 101 / PAO1), this protein is Ornithine carbamoyltransferase, catabolic.